A 519-amino-acid polypeptide reads, in one-letter code: Cyclin-dependent kinase C-1 (519 aa).

The Protein kinase domain maps to 25–325; the sequence is FEKLEQIGEG…AQDALDAEYF (301 aa). ATP is bound by residues 31-39 and K54; that span reads IGEGTYGQV. T35 carries the phosphothreonine modification. Residue Y36 is modified to Phosphotyrosine. D164 serves as the catalytic Proton acceptor. Phosphothreonine is present on T198. Over residues 336-348 the composition is skewed to basic and acidic residues; sequence SLPKYESSHEFQT. Residues 336-519 are disordered; the sequence is SLPKYESSHE…RNQQQYGNWQ (184 aa). Positions 426–444 are enriched in gly residues; it reads GNQGGGYPNRGGQGGGGSY. The segment covering 445–454 has biased composition (low complexity); sequence GNAPYPQQGR. Gly residues-rich tracts occupy residues 464-483 and 490-499; these read GMAGTGGPRGGVGGGYGGGS and GPYGPSGPGR. The segment covering 505–519 has biased composition (polar residues); that stretch reads QQGGSRNQQQYGNWQ.

It belongs to the protein kinase superfamily. CMGC Ser/Thr protein kinase family. CDC2/CDKX subfamily.

It catalyses the reaction L-seryl-[protein] + ATP = O-phospho-L-seryl-[protein] + ADP + H(+). It carries out the reaction L-threonyl-[protein] + ATP = O-phospho-L-threonyl-[protein] + ADP + H(+). The catalysed reaction is [DNA-directed RNA polymerase] + ATP = phospho-[DNA-directed RNA polymerase] + ADP + H(+). This Oryza sativa subsp. japonica (Rice) protein is Cyclin-dependent kinase C-1 (CDKC-1).